Consider the following 439-residue polypeptide: Vacuolar zinc transporter COT1 (439 aa).

The Cytoplasmic segment spans residues 1 to 9; it reads MKLGSKQVK. A helical membrane pass occupies residues 10–30; that stretch reads IISLLLLDTVFFGIEITTGYL. The Vacuolar portion of the chain corresponds to 31–33; sequence SHS. Residues 34 to 54 form a helical membrane-spanning segment; that stretch reads LALIADSFHMLNDIISLVVAL. At 55–76 the chain is on the cytoplasmic side; sequence WAVNVAKNRNPDSTYTYGWKRA. A helical membrane pass occupies residues 77 to 97; the sequence is EILGALINAVFLIALCVSILI. Over 98–113 the chain is Vacuolar; sequence EALQRIIAPPVIENPK. A helical transmembrane segment spans residues 114–134; the sequence is FVLYVGVAGLISNTVGLFLFH. Residues 135–244 lie on the Cytoplasmic side of the membrane; that stretch reads DNDQEHGHGH…RKRSLNMHGV (110 aa). 3 consecutive short sequence motifs (histidine repeat) follow at residues 140–144, 165–169, and 219–223; these read HGHGH, HTHAH, and SSHTI. Residues 207 to 230 show a composition bias toward polar residues; the sequence is PENASKTPSYSTSSHTIASGGNYT. The tract at residues 207–231 is disordered; that stretch reads PENASKTPSYSTSSHTIASGGNYTE. At serine 225 the chain carries Phosphoserine. Residues 245-265 traverse the membrane as a helical segment; that stretch reads FLHVLGDALGNIGVMLSAFFI. Residues 266–274 lie on the Vacuolar side of the membrane; the sequence is WKTDYSWKY. Residues 275 to 295 traverse the membrane as a helical segment; that stretch reads YTDPLVSLIITGIIFSSALPL. Over 296–439 the chain is Cytoplasmic; it reads SCKASKILLQ…CNTADCLEDH (144 aa). Lysine 301 participates in a covalent cross-link: Glycyl lysine isopeptide (Lys-Gly) (interchain with G-Cter in ubiquitin). The span at 388 to 402 shows a compositional bias: basic and acidic residues; it reads TSTERAGDSQGDHLQ. The segment at 388-408 is disordered; the sequence is TSTERAGDSQGDHLQNDPLSL.

It belongs to the cation diffusion facilitator (CDF) transporter (TC 2.A.4) family. SLC30A subfamily.

The protein resides in the vacuole membrane. It carries out the reaction Zn(2+)(in) = Zn(2+)(out). Functionally, vacuolar transporter that regulates zinc homeostasis by mediating zinc transport and storage into the vacuole. Plays a role in resistance to zinc shock resulting from sudden influx of zinc into cytoplasm. May also participate in the regulation of cobalt levels under normal physiological conditions and may be important in the supply of metal that is required for metalloenzyme or cofactor synthesis. Involved in the resistance to cobalt and rhodium ions. The protein is Vacuolar zinc transporter COT1 of Saccharomyces cerevisiae (strain ATCC 204508 / S288c) (Baker's yeast).